The following is a 21-amino-acid chain: Dahlein-5.6 (21 aa).

As to expression, expressed by the skin dorsal glands.

The protein localises to the secreted. Has no antimicrobial activity. Strongly inhibits the formation of NO by neuronal nitric oxide synthase at micromolar concentrations. The chain is Dahlein-5.6 from Ranoidea dahlii (Dahl's aquatic frog).